The sequence spans 294 residues: Eukaryotic translation initiation factor 3 subunit F (294 aa).

Residues 7-155 (VNVHPGVYMN…VRAYLRSKAG (149 aa)) form the MPN domain.

It belongs to the eIF-3 subunit F family. Component of the eukaryotic translation initiation factor 3 (eIF-3) complex.

The protein resides in the cytoplasm. Its function is as follows. Component of the eukaryotic translation initiation factor 3 (eIF-3) complex, which is involved in protein synthesis of a specialized repertoire of mRNAs and, together with other initiation factors, stimulates binding of mRNA and methionyl-tRNAi to the 40S ribosome. The eIF-3 complex specifically targets and initiates translation of a subset of mRNAs involved in cell proliferation. This chain is Eukaryotic translation initiation factor 3 subunit F, found in Caenorhabditis elegans.